Consider the following 317-residue polypeptide: Adenine deaminase (317 aa).

Positions 14, 16, and 194 each coordinate Zn(2+). Glutamate 197 (proton donor) is an active-site residue. Aspartate 275 contributes to the Zn(2+) binding site. Residue aspartate 276 participates in substrate binding.

Belongs to the metallo-dependent hydrolases superfamily. Adenosine and AMP deaminases family. Adenine deaminase type 2 subfamily. Requires Zn(2+) as cofactor.

It catalyses the reaction adenine + H2O + H(+) = hypoxanthine + NH4(+). Catalyzes the hydrolytic deamination of adenine to hypoxanthine. Plays an important role in the purine salvage pathway and in nitrogen catabolism. This Pseudomonas savastanoi pv. phaseolicola (strain 1448A / Race 6) (Pseudomonas syringae pv. phaseolicola (strain 1448A / Race 6)) protein is Adenine deaminase.